Here is a 254-residue protein sequence, read N- to C-terminus: tRNA pseudouridine synthase A (254 aa).

Asp-52 acts as the Nucleophile in catalysis. Tyr-110 is a binding site for substrate.

It belongs to the tRNA pseudouridine synthase TruA family. As to quaternary structure, homodimer.

The enzyme catalyses uridine(38/39/40) in tRNA = pseudouridine(38/39/40) in tRNA. Functionally, formation of pseudouridine at positions 38, 39 and 40 in the anticodon stem and loop of transfer RNAs. This chain is tRNA pseudouridine synthase A, found in Thermodesulfovibrio yellowstonii (strain ATCC 51303 / DSM 11347 / YP87).